Here is a 276-residue protein sequence, read N- to C-terminus: Lyso-ornithine lipid O-acyltransferase (276 aa).

The helical transmembrane segment at 25–47 (LALRGGAMALVLMAGLTLHLAVR) threads the bilayer.

The protein belongs to the 1-acyl-sn-glycerol-3-phosphate acyltransferase family. OlsA subfamily.

It is found in the membrane. The catalysed reaction is a lyso-ornithine lipid + a fatty acyl-[ACP] = an N(2)-[(3R)-3-(acyloxy)acyl]-L-ornithine lipid + holo-[ACP]. The enzyme catalyses a fatty acyl-[ACP] + a 1-acyl-sn-glycero-3-phosphate = a 1,2-diacyl-sn-glycero-3-phosphate + holo-[ACP]. It participates in lipid metabolism. The protein operates within phospholipid metabolism. Catalyzes the second step in the formation of ornithine lipids, which are phosphorus-free membrane lipids. Uses acyl-acyl carrier protein (acyl-AcpP) as an acyl donor and converts lyso-ornithine lipid (LOL) into ornithine lipid (OL). It can also act as an alternate acyl-sn-glycerol-3-phosphate acyltransferase (AGPAT) to ensure glycerophospholipid production. The polypeptide is Lyso-ornithine lipid O-acyltransferase (Rhodobacter capsulatus (strain ATCC BAA-309 / NBRC 16581 / SB1003)).